The chain runs to 325 residues: Sel1-repeat-containing protein YbeQ (325 aa).

8 Sel1-like repeats span residues 26–61, 63–97, 103–130, 132–167, 168–203, 205–239, 242–275, and 280–305; these read EAQY…EQGH, EAQY…LQGH, ALGW…AESG, SYAQ…LQGH, SDAQ…QQGN, HAQF…AQGS, AYVN…ECND, and YNLA…LYRK.

It to E.coli YbeT.

The sequence is that of Sel1-repeat-containing protein YbeQ (ybeQ) from Escherichia coli (strain K12).